The chain runs to 154 residues: Troponin C, isoform 1 (154 aa).

4 EF-hand domains span residues 8–43 (EQTA…LGHQ), 44–79 (LDDA…FLVE), 84–119 (AMMA…LDDK), and 120–154 (LTND…GGDD). Residues D57, D59, S61, Q63, and E68 each contribute to the Ca(2+) site. 5 residues coordinate Ca(2+): D133, D135, S137, T139, and E144.

It belongs to the troponin C family. As to expression, present only in adult muscles.

The protein is Troponin C, isoform 1 (TpnC41C) of Drosophila melanogaster (Fruit fly).